Here is a 922-residue protein sequence, read N- to C-terminus: DNA gyrase subunit A (922 aa).

The 501-residue stretch at 34 to 534 folds into the Topo IIA-type catalytic domain; it reads LPDVRDGLKP…SSAEINIEDL (501 aa). Tyr-122 serves as the catalytic O-(5'-phospho-DNA)-tyrosine intermediate. A GyrA-box motif is present at residues 561–567; it reads QRRGGRG. Disordered regions lie at residues 715 to 763 and 899 to 922; these read MQPM…VRPM and IDGEVSEGTDTAPDAGSAAADPEE. The span at 723–743 shows a compositional bias: acidic residues; it reads DDVDGDDESVIDAGNDDDGSD.

It belongs to the type II topoisomerase GyrA/ParC subunit family. As to quaternary structure, heterotetramer, composed of two GyrA and two GyrB chains. In the heterotetramer, GyrA contains the active site tyrosine that forms a transient covalent intermediate with DNA, while GyrB binds cofactors and catalyzes ATP hydrolysis.

It is found in the cytoplasm. The enzyme catalyses ATP-dependent breakage, passage and rejoining of double-stranded DNA.. Its function is as follows. A type II topoisomerase that negatively supercoils closed circular double-stranded (ds) DNA in an ATP-dependent manner to modulate DNA topology and maintain chromosomes in an underwound state. Negative supercoiling favors strand separation, and DNA replication, transcription, recombination and repair, all of which involve strand separation. Also able to catalyze the interconversion of other topological isomers of dsDNA rings, including catenanes and knotted rings. Type II topoisomerases break and join 2 DNA strands simultaneously in an ATP-dependent manner. The chain is DNA gyrase subunit A from Aeromonas salmonicida.